The following is a 214-amino-acid chain: MIEMLIGIAFAGFILAIPYVYERVGGKLSLGKLSLGMPKLRSKKEVEEKIKEVDRELEEVVNAGVSINPKPAEEKVVPLDDANVEPDDNLLEEMETASEIKVEAPEPDEEKLPDIPDLPELNSDLDMDFEDLGQEIPLDADEQEEEEEEEEVEEVEFDEEDDLISSLAKEVETKEEEEIDLLRDLKGQKFSAEELEAELQEMIQRLKVLSGGSS.

Positions 39 to 68 form a coiled coil; it reads KLRSKKEVEEKIKEVDRELEEVVNAGVSIN. Positions 99–114 are enriched in basic and acidic residues; that stretch reads EIKVEAPEPDEEKLPD. Positions 99–162 are disordered; that stretch reads EIKVEAPEPD…EEVEFDEEDD (64 aa). Over residues 123-162 the composition is skewed to acidic residues; the sequence is SDLDMDFEDLGQEIPLDADEQEEEEEEEEVEEVEFDEEDD. Residues 138–212 are a coiled coil; it reads LDADEQEEEE…IQRLKVLSGG (75 aa).

This is an uncharacterized protein from Archaeoglobus fulgidus (strain ATCC 49558 / DSM 4304 / JCM 9628 / NBRC 100126 / VC-16).